Consider the following 497-residue polypeptide: Signal recognition particle subunit SRP54 1 (497 aa).

Positions 1–295 are G-domain; the sequence is MVLAQLGGSI…DVKPFVSRLL (295 aa). GTP-binding positions include 108–115, 190–194, and 248–251; these read GLQGSGKT, DTSGR, and TKLD. The interval 296 to 497 is M-domain; sequence GMGDLSGLMD…MLGGMGLGGD (202 aa).

This sequence belongs to the GTP-binding SRP family. SRP54 subfamily. As to quaternary structure, component of a signal recognition particle (SRP) complex that consists of a 7SL RNA molecule of 300 nucleotides and six protein subunits: SRP72, SRP68, SRP54, SRP19, SRP14 and SRP9.

The protein localises to the cytoplasm. Its subcellular location is the endoplasmic reticulum. The catalysed reaction is GTP + H2O = GDP + phosphate + H(+). Functionally, component of the signal recognition particle (SRP) complex, a ribonucleoprotein complex that mediates the cotranslational targeting of secretory and membrane proteins to the endoplasmic reticulum (ER). As part of the SRP complex, associates with the SRP receptor (SR) component SRPRA to target secretory proteins to the endoplasmic reticulum membrane. Binds to the signal sequence of presecretory proteins when they emerge from the ribosomes. Displays basal GTPase activity, and stimulates reciprocal GTPase activation of the SR subunit SRPRA. Forms a guanosine 5'-triphosphate (GTP)-dependent complex with the SR subunit SRPRA. SR compaction and GTPase mediated rearrangement of SR drive SRP-mediated cotranslational protein translocation into the ER. Requires the presence of SRP9/SRP14 and/or SRP19 to stably interact with RNA. In Hordeum vulgare (Barley), this protein is Signal recognition particle subunit SRP54 1 (SRP54-1).